A 163-amino-acid chain; its full sequence is MAKDSSFDIVSKVEMQEVINAVHQAQKEIEQRFDFKNSKSSLELQDEKIILVSDDDFKLRNVIDILESKLVKRQVSLKALEYGKVQPAAGDTVRQEVKLVQGISQDKGKEINKLIKDSKIKVSSSIQGDQVRVTGKNKDDLQEVIALLRKQDLGIDLQFINYR.

The protein belongs to the YajQ family.

Nucleotide-binding protein. This is Nucleotide-binding protein Dhaf_3127 from Desulfitobacterium hafniense (strain DSM 10664 / DCB-2).